Here is a 59-residue protein sequence, read N- to C-terminus: uncharacterized protein (59 aa).

This is an uncharacterized protein from Archaeoglobus fulgidus (strain ATCC 49558 / DSM 4304 / JCM 9628 / NBRC 100126 / VC-16).